The primary structure comprises 126 residues: MRHYEIVFMVHPDQSEQVAGMIERYTGSITEAGGTIHRLEDWGRRQMAYPINKLHKAHYVLMNVESEQAVIDELETAFRYNDAVLRNMIMRTKAAITEPSVMMKAKEERSAKREDAAPRAEEAAAE.

Residues 101–126 (VMMKAKEERSAKREDAAPRAEEAAAE) form a disordered region. Basic and acidic residues predominate over residues 104-126 (KAKEERSAKREDAAPRAEEAAAE).

It belongs to the bacterial ribosomal protein bS6 family.

Its function is as follows. Binds together with bS18 to 16S ribosomal RNA. The polypeptide is Small ribosomal subunit protein bS6 (Aliivibrio fischeri (strain ATCC 700601 / ES114) (Vibrio fischeri)).